The following is a 97-amino-acid chain: Co-chaperonin GroES (97 aa).

It belongs to the GroES chaperonin family. In terms of assembly, heptamer of 7 subunits arranged in a ring. Interacts with the chaperonin GroEL.

The protein resides in the cytoplasm. Functionally, together with the chaperonin GroEL, plays an essential role in assisting protein folding. The GroEL-GroES system forms a nano-cage that allows encapsulation of the non-native substrate proteins and provides a physical environment optimized to promote and accelerate protein folding. GroES binds to the apical surface of the GroEL ring, thereby capping the opening of the GroEL channel. In Pseudomonas savastanoi pv. phaseolicola (strain 1448A / Race 6) (Pseudomonas syringae pv. phaseolicola (strain 1448A / Race 6)), this protein is Co-chaperonin GroES.